We begin with the raw amino-acid sequence, 268 residues long: Undecaprenyl-diphosphatase (268 aa).

8 consecutive transmembrane segments (helical) span residues 8 to 28 (VILG…TGHL), 41 to 61 (AFWD…IVGL), 83 to 103 (FVIG…VAGK), 108 to 128 (VLFN…ILLW), 144 to 164 (FPLL…IPGV), 184 to 204 (AAEF…AYDF), 218 to 238 (IVAI…KTFL), and 246 to 266 (FVVF…ALAL).

It belongs to the UppP family.

Its subcellular location is the cell inner membrane. It catalyses the reaction di-trans,octa-cis-undecaprenyl diphosphate + H2O = di-trans,octa-cis-undecaprenyl phosphate + phosphate + H(+). In terms of biological role, catalyzes the dephosphorylation of undecaprenyl diphosphate (UPP). Confers resistance to bacitracin. The sequence is that of Undecaprenyl-diphosphatase from Bradyrhizobium diazoefficiens (strain JCM 10833 / BCRC 13528 / IAM 13628 / NBRC 14792 / USDA 110).